The chain runs to 371 residues: N-acetyldiaminopimelate deacetylase (371 aa).

The active site involves aspartate 68. The active-site Proton acceptor is glutamate 127.

This sequence belongs to the peptidase M20A family. N-acetyldiaminopimelate deacetylase subfamily.

It carries out the reaction N-acetyl-(2S,6S)-2,6-diaminopimelate + H2O = (2S,6S)-2,6-diaminopimelate + acetate. It functions in the pathway amino-acid biosynthesis; L-lysine biosynthesis via DAP pathway; LL-2,6-diaminopimelate from (S)-tetrahydrodipicolinate (acetylase route): step 3/3. Catalyzes the conversion of N-acetyl-diaminopimelate to diaminopimelate and acetate. The protein is N-acetyldiaminopimelate deacetylase of Oceanobacillus iheyensis (strain DSM 14371 / CIP 107618 / JCM 11309 / KCTC 3954 / HTE831).